A 183-amino-acid polypeptide reads, in one-letter code: Protein FAM180B (183 aa).

Residues 1–23 (MAATLQFLVCLVVAICLLSGVTT) form the signal peptide.

It belongs to the FAM180 family.

The protein localises to the secreted. This Homo sapiens (Human) protein is Protein FAM180B (FAM180B).